The sequence spans 355 residues: GTPase Obg (355 aa).

In terms of domain architecture, Obg spans 1–159 (MKLVDEAEIL…RLLKLELKLL (159 aa)). Residues 160 to 342 (ADVGLLGFPN…IMKDVMAFFD (183 aa)) form the OBG-type G domain. GTP is bound by residues 166 to 173 (GFPNAGKS), 191 to 195 (FTTLY), 213 to 216 (DVPG), 292 to 295 (NKAD), and 323 to 325 (SAL). Residues Ser-173 and Thr-193 each contribute to the Mg(2+) site.

This sequence belongs to the TRAFAC class OBG-HflX-like GTPase superfamily. OBG GTPase family. As to quaternary structure, monomer. It depends on Mg(2+) as a cofactor.

It localises to the cytoplasm. In terms of biological role, an essential GTPase which binds GTP, GDP and possibly (p)ppGpp with moderate affinity, with high nucleotide exchange rates and a fairly low GTP hydrolysis rate. Plays a role in control of the cell cycle, stress response, ribosome biogenesis and in those bacteria that undergo differentiation, in morphogenesis control. The polypeptide is GTPase Obg (Xanthomonas euvesicatoria pv. vesicatoria (strain 85-10) (Xanthomonas campestris pv. vesicatoria)).